A 183-amino-acid chain; its full sequence is Adenine phosphoribosyltransferase (183 aa).

Belongs to the purine/pyrimidine phosphoribosyltransferase family. In terms of assembly, homodimer.

It is found in the cytoplasm. The enzyme catalyses AMP + diphosphate = 5-phospho-alpha-D-ribose 1-diphosphate + adenine. It functions in the pathway purine metabolism; AMP biosynthesis via salvage pathway; AMP from adenine: step 1/1. Catalyzes a salvage reaction resulting in the formation of AMP, that is energically less costly than de novo synthesis. In Salmonella heidelberg (strain SL476), this protein is Adenine phosphoribosyltransferase.